A 474-amino-acid chain; its full sequence is HTH-type transcriptional regulator RamB (474 aa).

Positions 10 to 64 (VRQLRNERGFSQAALAQMLEISPSYLNQIEHDVRPLTVAVLLRITEVFGVDATFF) constitute an HTH cro/C1-type domain. A DNA-binding region (H-T-H motif) is located at residues 21-40 (QAALAQMLEISPSYLNQIEH).

The protein belongs to the short-chain fatty acyl-CoA assimilation regulator (ScfR) family.

In terms of biological role, involved in the control of the glyoxylate cycle. RamB negatively controls the expression of icl expression during growth on acetate as the sole carbon source. This is HTH-type transcriptional regulator RamB from Mycobacterium tuberculosis (strain CDC 1551 / Oshkosh).